The chain runs to 611 residues: Protein decapping 5 (611 aa).

The Sm domain maps to 9 to 92 (KSSSAADSYV…IKDLQVKASP (84 aa)). Disordered stretches follow at residues 111 to 153 (HYPS…AMPL), 183 to 238 (GLPQ…PSSL), 264 to 301 (SSSLQSTLQSAPSPSLASEMAPPLLSNKAPITAPPTLP), 318 to 362 (EAST…DKPK), 396 to 455 (QVSS…AGRS), and 519 to 611 (FFDS…NRTT). Composition is skewed to polar residues over residues 117-140 (PTSGSLPSTASGSLPDISSHNGQP) and 203-214 (NSLQQPLQYPNF). Residues 264–281 (SSSLQSTLQSAPSPSLAS) are compositionally biased toward low complexity. Polar residues-rich tracts occupy residues 318–330 (EASTGLPLSNKPS), 396–413 (QVSSSAGLEQSVPVTSEA), and 424–437 (ARPTQKPNGHSFPN). Residues 441–453 (YRGRGRGRGRGAG) show a composition bias toward basic residues. A DFDF domain is found at 453-489 (GRSHQVMKFTEDFDFTAMNEKFNKDEVWGHLGKSTTL). Positions 512–527 (PVYNKDDFFDSLSSNT) match the FFD box motif. The segment covering 528–547 (IDRESQNSRPRFSEQRKLDT) has biased composition (basic and acidic residues). A TFG box motif is present at residues 534-554 (NSRPRFSEQRKLDTETFGEFS). A compositionally biased stretch (gly residues) spans 559 to 604 (GRGGRGGYGRNNGYSRGGYGGRGYGGYGGRGGGGGGYGYGGRGQGR).

Belongs to the LSM14 family. As to quaternary structure, homodimer. Component of the decapping complex. Interacts with DCP1 and DCP2.

The protein resides in the cytoplasm. It localises to the P-body. Its function is as follows. As a component of the decapping complex, involved in the degradation of mRNAs. Promotes P-body formation. Translational repressor. The polypeptide is Protein decapping 5 (DCP5) (Arabidopsis thaliana (Mouse-ear cress)).